Here is a 501-residue protein sequence, read N- to C-terminus: Neuronal acetylcholine receptor subunit beta-2 (501 aa).

Residues 1 to 25 form the signal peptide; sequence MARCSNSMALLFSFGLLWLCSGVLG. The Extracellular segment spans residues 26-238; sequence TDTEERLVEH…IIRRKPLFYT (213 aa). Asparagine 51 and asparagine 168 each carry an N-linked (GlcNAc...) asparagine glycan. Cysteine 155 and cysteine 169 are disulfide-bonded. Residues 239–259 form a helical membrane-spanning segment; that stretch reads INLIIPCVLITSLAILVFYLP. Over 260-267 the chain is Cytoplasmic; sequence SDCGEKMT. A helical transmembrane segment spans residues 268–288; sequence LCISVLLALTVFLLLISKIVP. Over 289–300 the chain is Extracellular; that stretch reads PTSLDVPLVGKY. A helical transmembrane segment spans residues 301-321; sequence LMFTMVLVTFSIVTSVCVLNV. Residues 322-459 are Cytoplasmic-facing; that stretch reads HHRSPTTHTM…WKYVAMVIDR (138 aa). A helical membrane pass occupies residues 460 to 480; sequence LFLWIFVFVCVFGTIGMFLQP.

Belongs to the ligand-gated ion channel (TC 1.A.9) family. Acetylcholine receptor (TC 1.A.9.1) subfamily. Beta-2/CHRNB2 sub-subfamily. As to quaternary structure, neuronal AChR is a heteropentamer composed of two different types of subunits: alpha and beta. CHRNB2/Beta-2 subunit can be combined to CHRNA2/alpha-2, CHRNA3/alpha-3 or CHRNA4/alpha-4, CHRNA5/alpha-5, CHRNA6/alpha-6 and CHRNB3/beta-3 to give rise to functional receptors. CHRNA2:CHRNB2 and CHRNA4:CHRNB2 nAChR complexes exist in two subtypes: LS (low agonist sensitivity) with a (CHRNA2/4)3:(CHRNB2)2 and HS (high agonist sensitivity) with a (CHRNA2/4)2:(CHRNB2)3 stoichiometry; the subtypes differ in their subunit binding interfaces which are involved in ligand binding. Cells produce predominantly an (CHRNA4)3:(CHRNB2)2 nAChR. The stoichiometric form (CHRNA4)2:(CHRNB2)3 expression is selectively up-regulated by nicotine and has lower single channel conductance and calcium permeability. Also part of the stoichiometric forms: (CHRNA4:CHRNB2)2:CHRNB3 or (CHRNA6:CHRNB2)2:CHRNB3. Can form heteropentamers with CHRNA7, mainly found in basal forebrain cholinergic neurons. Interacts with RIC3; which is required for proper folding and assembly. Interacts with LYPD6.

The protein localises to the synaptic cell membrane. It is found in the cell membrane. It carries out the reaction K(+)(in) = K(+)(out). It catalyses the reaction Na(+)(in) = Na(+)(out). The enzyme catalyses Ca(2+)(in) = Ca(2+)(out). Its activity is regulated as follows. Activated by a myriad of ligands such as acetylcholine, cytisine, nicotine, choline and epibatidine. Channel potentiation by calcium is stoichiometry-selective, CHRNA4:CHRNB2 nACh receptor is achieved by calcium association with topographically distinct sites framed by anionic residues within the CHRNA4 subunit and between the CHRNA4 and CHRNB2 subunits. Oligomeric amyloid-beta protein 42 activates specifially CHRNA7:CHRNB2 nAchRs. nAChR activity is inhibited by the antagonist alpha-conotoxins BuIA, PnIA, PnIC, GID and MII, small disulfide-constrained peptides from cone snails. Functionally, component of neuronal acetylcholine receptors (nAChRs) that function as pentameric, ligand-gated cation channels with high calcium permeability among other activities. nAChRs are excitatory neurotrasnmitter receptors formed by a collection of nAChR subunits known to mediate synaptic transmission in the nervous system and the neuromuscular junction. Each nAchR subunit confers differential attributes to channel properties, including activation, deactivation and desensitization kinetics, pH sensitivity, cation permeability, and binding to allosteric modulators. CHRNB2 forms heteropentameric neuronal acetylcholine receptors with CHRNA2, CHRNA3, CHRNA4 and CHRNA6, as well as CHRNA5 and CHRNB3 as accesory subunits. Found in two major stoichiometric forms,(CHRNA4)3:(CHRNB2)2 and (CHRNA4)2:(CHRNB2)3, the two stoichiometric forms differ in their unitary conductance, calcium permeability, ACh sensitivity and potentiation by divalent cation. Heteropentameric channels with CHRNA6 and CHRNA4 exhibit high sensitivity to ACh and nicotine and are predominantly expressed in only a few brain areas, including dopaminergic neurons, norepirephrine neurons and cells of the visual system. nAChrs containing CHRNA6 subunits mediate endogenous cholinergic modulation of dopamine and gamma-aminobutyric acid (GABA) release in response to nicotine at nerve terminals. Also forms functional nAChRs with other subunits such as CHRNA7:CHRNB2, mainly expressed in basal forebrain cholinergic neurons. The polypeptide is Neuronal acetylcholine receptor subunit beta-2 (Chrnb2) (Mus musculus (Mouse)).